The following is a 192-amino-acid chain: uncharacterized protein (192 aa).

Residues 29–160 (HRQAAVLIPI…PLDIYRRGDS (132 aa)) enclose the Nudix hydrolase domain. The short motif at 67 to 89 (GAVDDTDTSVIAAALREAEEEVA) is the Nudix box element. 2 residues coordinate Mg(2+): E83 and E87.

It belongs to the Nudix hydrolase family. PCD1 subfamily. Mn(2+) serves as cofactor. Mg(2+) is required as a cofactor.

In terms of biological role, probably mediates the hydrolysis of some nucleoside diphosphate derivatives. This is an uncharacterized protein from Escherichia fergusonii (strain ATCC 35469 / DSM 13698 / CCUG 18766 / IAM 14443 / JCM 21226 / LMG 7866 / NBRC 102419 / NCTC 12128 / CDC 0568-73).